A 221-amino-acid polypeptide reads, in one-letter code: Esterase C25G4.2 (221 aa).

Active-site charge relay system residues include Ser106, Asp166, and His194.

The protein belongs to the LovG family.

The chain is Esterase C25G4.2 from Caenorhabditis elegans.